We begin with the raw amino-acid sequence, 154 residues long: MAARVCCQLDPARDVLCLRPVGAESRGRPVSGPFGTLPSPSSSAVPADHGAHLSLRGLFVCAFSSAGPCALRFTSARRMETTVNAHQVLPKVLHKRTLGLSAMSTTDLEAYFKDCLFKDWEELGEEIRLKVFVLGGCRHKLVCSPAPCNFFTSA.

The mitochondrial targeting sequence stretch occupies residues proline 68–phenylalanine 117.

The protein belongs to the orthohepadnavirus protein X family. In terms of assembly, may form homodimer. May interact with host CEBPA, CFLAR, CREB1, DDB1, E4F1, HBXIP, HSPD1/HSP60, NFKBIA, POLR2E and SMAD4. Interacts with host SMC5-SMC6 complex and induces its degradation. Interacts with host TRPC4AP; leading to prevent ubiquitination of TRPC4AP. Interacts with host PLSCR1; this interaction promotes ubiquitination and degradation of HBx and impairs HBx-mediated cell proliferation. In terms of processing, a fraction may be phosphorylated in insect cells and HepG2 cells, a human hepatoblastoma cell line. Phosphorylated in vitro by host protein kinase C or mitogen-activated protein kinase. N-acetylated in insect cells.

It localises to the host cytoplasm. It is found in the host nucleus. The protein resides in the host mitochondrion. Functionally, multifunctional protein that plays a role in silencing host antiviral defenses and promoting viral transcription. Does not seem to be essential for HBV infection. May be directly involved in development of cirrhosis and liver cancer (hepatocellular carcinoma). Most of cytosolic activities involve modulation of cytosolic calcium. The effect on apoptosis is controversial depending on the cell types in which the studies have been conducted. May induce apoptosis by localizing in mitochondria and causing loss of mitochondrial membrane potential. May also modulate apoptosis by binding host CFLAR, a key regulator of the death-inducing signaling complex (DISC). Promotes viral transcription by using the host E3 ubiquitin ligase DDB1 to target the SMC5-SMC6 complex to proteasomal degradation. This host complex would otherwise bind to viral episomal DNA, and prevents its transcription. Moderately stimulates transcription of many different viral and cellular transcription elements. Promoters and enhancers stimulated by HBx contain DNA binding sites for NF-kappa-B, AP-1, AP-2, c-EBP, ATF/CREB, or the calcium-activated factor NF-AT. This chain is Protein X, found in Hepatitis B virus genotype C subtype adr (strain Japan/adr4/1983) (HBV-C).